The sequence spans 277 residues: Large ribosomal subunit protein uL2 (277 aa).

Residues 218 to 277 (PTVRGSVMNPNDHPHGGGEGKAPVGRKAPSTPWGKPALGLKTRNKKAKSDKLIVRRRNEK) form a disordered region. The segment covering 264–277 (AKSDKLIVRRRNEK) has biased composition (basic and acidic residues).

It belongs to the universal ribosomal protein uL2 family. As to quaternary structure, part of the 50S ribosomal subunit. Forms a bridge to the 30S subunit in the 70S ribosome.

Its function is as follows. One of the primary rRNA binding proteins. Required for association of the 30S and 50S subunits to form the 70S ribosome, for tRNA binding and peptide bond formation. It has been suggested to have peptidyltransferase activity; this is somewhat controversial. Makes several contacts with the 16S rRNA in the 70S ribosome. This chain is Large ribosomal subunit protein uL2, found in Streptococcus pyogenes serotype M4 (strain MGAS10750).